Here is a 1493-residue protein sequence, read N- to C-terminus: DNA excision repair protein ERCC-6 (1493 aa).

The disordered stretch occupies residues Met1–Gly39. Residues Met1–Tyr510 form an N-terminal domain; essential for its chromatin remodeling activity region. Over residues His8–Glu27 the composition is skewed to polar residues. The residue at position 10 (Ser10) is a Phosphoserine; by ATM. Ser158 is subject to Phosphoserine; by CDK2. At Lys170 the chain carries N6-methylated lysine; by EHMT2. A Glycyl lysine isopeptide (Lys-Gly) (interchain with G-Cter in SUMO3) cross-link involves residue Lys205. Residue Lys255 forms a Glycyl lysine isopeptide (Lys-Gly) (interchain with G-Cter in SUMO2) linkage. Disordered stretches follow at residues Lys287–Lys323 and Gly344–Arg453. Lys297 carries the N6-methylated lysine; by EHMT2 modification. Residues Arg353–Ala363 are compositionally biased toward basic and acidic residues. A compositionally biased stretch (acidic residues) spans Glu364–Glu392. Residues Ser429 and Ser430 each carry the phosphoserine modification. Lys448 bears the N6-methylated lysine; by EHMT2 mark. Phosphoserine is present on residues Ser486 and Ser489. The 177-residue stretch at Trp519 to Gly695 folds into the Helicase ATP-binding domain. Residue Asp532–Thr539 participates in ATP binding. Positions Asp646–His649 match the DEAH box motif. Residues Val843–Tyr1002 enclose the Helicase C-terminal domain. 3 disordered regions span residues Pro1042–Ile1147, His1181–Asn1247, and Arg1318–Leu1384. Lys1054 is modified (N6-methylated lysine; by EHMT2). Residues Ile1123–Pro1141 show a composition bias toward polar residues. Phosphoserine is present on Ser1142. Positions Leu1200–Lys1210 are enriched in basic residues. Basic and acidic residues-rich tracts occupy residues His1211–Arg1221 and Gln1232–Asn1247. The segment covering Lys1327–Asn1336 has biased composition (basic residues). Positions Ser1337 to Glu1351 are enriched in polar residues. Ser1348 carries the phosphoserine modification. The segment covering Lys1352–Asp1376 has biased composition (basic and acidic residues). The CSA-interacting motif (CIM) signature appears at Ser1386–His1398. Positions Ile1400–Leu1428 are ubiquitin-binding domain (UBD). Residues Val1429–Cys1493 are winged-helix domain (WHD). The essential for its interaction with RNA polymerase II, transcription-coupled nucleotide excision repair activity, association with chromatin after UV irradiation and for mediating the UV-induced translocation of ERRC8 to the nuclear matrix stretch occupies residues Ser1446–Cys1493.

Belongs to the SNF2/RAD54 helicase family. Homodimer. Binds DNA. Interacts with ERCC8. Interacts with RNA polymerase II; interaction is enhanced by UV irradiation. Component of the B-WICH complex, at least composed of SMARCA5/SNF2H, BAZ1B/WSTF, SF3B1, DEK, MYO1C, ERCC6, MYBBP1A and DDX21. Interacts with KIAA1530/UVSSA. Interacts with ELOA and CUL5; the interaction is induced by DNA damaging agents or by inhibitors of RNA polymerase II elongation. Interacts (via WHD region) with RIF1. Interacts with SMARCC2/BAF170, SMARCB1/BAF47 and the neuron-specific chromatin remodeling complex (nBAF complex). Interacts with ERCC5/XPG (via C-terminus); the interaction stimulates ERCC6/CSB binding to the DNA repair bubble and ERCC6/CSB ATPase activity. May form a complex composed of RNA polymerase II, ERCC6/CSB and ERCC5/XPG which associates with the DNA repair bubble during transcription-coupled nucleotide excision repair. Interacts with CAND1, CSTF1, DDX3X, DDX5, DDX17, DDX23, DHX36, HDAC1, HNRNPU, MTA2, PRPF3, PSMD3, RBBP4, SFPQ, SMARCA1, SMARCA2, TOP1, USP7, XRCC5, COPS3, COPS4, COPS6, DDX1, DDX41, GATAD2A, GATAD2B, PRPF4, PSMC5, SF3B2, CTR9, NONO, PSMD12 and TOP2A. Post-translationally, phosphorylated in a cell cycle-dependent manner at Ser-158 by cyclin A-CDK2 and at Ser-10 by ATM in response to DNA damage. Phosphorylation at these two sites promotes the intramolecular interaction of the N-terminal domain with the helicase ATP-binding domain, thereby probably releasing the inhibitory effect of the N-terminal domain on its ATPase activity. Phosphorylation is essential for its chromatin remodeling activity. In terms of processing, ubiquitinated at the C-terminus. Ubiquitination by the CSA complex leads to ERCC6 proteasomal degradation in a UV-dependent manner. Stabilized following interaction with KIAA1530/UVSSA, which promotes recruitment of deubiquitinating enzyme USP7, leading to deubiquitination of ERCC6 thereby preventing UV-induced degradation of ERCC6 by the proteasome. Sumoylation at Lys-205 in an UV-radiation-dependent manner is essential for its transcription-coupled nucleotide excision repair activity.

The protein localises to the nucleus. It is found in the chromosome. The enzyme catalyses ATP + H2O = ADP + phosphate + H(+). Its function is as follows. Essential factor involved in transcription-coupled nucleotide excision repair (TC-NER), a process during which RNA polymerase II-blocking lesions are rapidly removed from the transcribed strand of active genes. Plays a central role in the initiation of the TC-NER process: specifically recognizes and binds RNA polymerase II stalled at a lesion, and mediates recruitment of ERCC8/CSA, initiating DNA damage excision by TFIIH recruitment. Upon DNA-binding, it locally modifies DNA conformation by wrapping the DNA around itself, thereby modifying the interface between stalled RNA polymerase II and DNA. Acts as a chromatin remodeler at DSBs; DNA-dependent ATPase-dependent activity is essential for this function. Plays an important role in regulating the choice of the DNA double-strand breaks (DSBs) repair pathway and G2/M checkpoint activation; DNA-dependent ATPase activity is essential for this function. Regulates the DNA repair pathway choice by inhibiting non-homologous end joining (NHEJ), thereby promoting the homologous recombination (HR)-mediated repair of DSBs during the S/G2 phases of the cell cycle. Mediates the activation of the ATM- and CHEK2-dependent DNA damage responses thus preventing premature entry of cells into mitosis following the induction of DNA DSBs. Remodels chromatin by evicting histones from chromatin flanking DSBs, limiting RIF1 accumulation at DSBs thereby promoting BRCA1-mediated HR. Required for stable recruitment of ELOA and CUL5 to DNA damage sites. Also involved in UV-induced translocation of ERCC8 to the nuclear matrix. Essential for neuronal differentiation and neuritogenesis; regulates transcription and chromatin remodeling activities required during neurogenesis. The chain is DNA excision repair protein ERCC-6 from Homo sapiens (Human).